The chain runs to 421 residues: Odorant receptor 67b (421 aa).

At 1–48 (MQDQLDHELERIDKLPKLGLLWVEYSAYALGVNIAPRKRSSKYCRLTR) the chain is on the cytoplasmic side. The chain crosses the membrane as a helical span at residues 49-69 (ILVLIVNLSIIYSLVAFIMEN). The Extracellular segment spans residues 70–71 (YM). A helical transmembrane segment spans residues 72 to 92 (ISFETYVEAVLLTFQLSVGVV). Topologically, residues 93 to 151 (KMFHFQNKVESCSQLVFSTETGEVLKSLGLFQLDLPRKKELLSSVSLILLNNWMIIDRQ) are cytoplasmic. A helical transmembrane segment spans residues 152-172 (VMFFFKIVCMPVLYYCVRPYF). Topologically, residues 173–217 (QYIFDCYIKDKDTCEMTLTYPAIVPYLQLGNYEFPSYVIRFFLLQ) are extracellular. Residues 218–238 (SGPLWCFFAVFGFNSLFVVLT) form a helical membrane-spanning segment. Over 239–289 (RYESGLIKVLRFLVQNSTSDILVPKDQRVKYLQCCVRLFARISSHHNQIEN) the chain is Cytoplasmic. Residues 290–310 (LFKYIILVQCSVSSILICMLL) traverse the membrane as a helical segment. The Extracellular segment spans residues 311 to 315 (YKIST). The chain crosses the membrane as a helical span at residues 316–336 (VLEVGWVWMGMIMVYFVTIAL). Over 337-384 (EITLYNVSAQKVESQSELLFHDWYNCSWYNESREFKFMIKMMLLFSRR) the chain is Cytoplasmic. A helical transmembrane segment spans residues 385–405 (TFVLSVGGFTSLSHKFLVQVF). Residues 406–421 (RLSANFFLLLRNMNNK) are Extracellular-facing.

It belongs to the insect chemoreceptor superfamily. Heteromeric odorant receptor channel (TC 1.A.69) family. Or63a subfamily. As to quaternary structure, interacts with Orco. Complexes exist early in the endomembrane system in olfactory sensory neurons (OSNs), coupling these complexes to the conserved ciliary trafficking pathway.

The protein localises to the cell membrane. Its function is as follows. Odorant receptor which mediates acceptance or avoidance behavior, depending on its substrates. The odorant receptor repertoire encodes a large collection of odor stimuli that vary widely in identity, intensity, and duration. May form a complex with Orco to form odorant-sensing units, providing sensitive and prolonged odorant signaling and calcium permeability. Involved in the behavioral responses to ethyl acetate, pentyl acetate, methyl caproate, anisole, heptanal, 2-heptanone, r-carvone, nonanoic acid, and pyrazines. This Drosophila melanogaster (Fruit fly) protein is Odorant receptor 67b (Or67b).